A 647-amino-acid polypeptide reads, in one-letter code: Threonine--tRNA ligase (647 aa).

The TGS domain occupies 1-63; the sequence is MYMIQLTFPD…EHDGKIELVM (63 aa). Positions 247–544 are catalytic; the sequence is DHRKLGKELD…LIEEYKGAFP (298 aa). The Zn(2+) site is built by Cys340, His391, and His521.

Belongs to the class-II aminoacyl-tRNA synthetase family. Homodimer. Zn(2+) serves as cofactor.

The protein resides in the cytoplasm. The enzyme catalyses tRNA(Thr) + L-threonine + ATP = L-threonyl-tRNA(Thr) + AMP + diphosphate + H(+). Functionally, catalyzes the attachment of threonine to tRNA(Thr) in a two-step reaction: L-threonine is first activated by ATP to form Thr-AMP and then transferred to the acceptor end of tRNA(Thr). Also edits incorrectly charged L-seryl-tRNA(Thr). In Exiguobacterium sp. (strain ATCC BAA-1283 / AT1b), this protein is Threonine--tRNA ligase.